The following is a 180-amino-acid chain: Negative modulator of initiation of replication (180 aa).

Interaction with DNA stretches follow at residues 86–87, 115–119, and 149–155; these read AV, RTRVY, and NTNTGRK.

Belongs to the SeqA family. In terms of assembly, homodimer. Polymerizes to form helical filaments.

The protein localises to the cytoplasm. In terms of biological role, negative regulator of replication initiation, which contributes to regulation of DNA replication and ensures that replication initiation occurs exactly once per chromosome per cell cycle. Binds to pairs of hemimethylated GATC sequences in the oriC region, thus preventing assembly of replication proteins and re-initiation at newly replicated origins. Repression is relieved when the region becomes fully methylated. The chain is Negative modulator of initiation of replication from Enterobacter sp. (strain 638).